We begin with the raw amino-acid sequence, 282 residues long: Shikimate dehydrogenase (NADP(+)) (282 aa).

Shikimate-binding positions include 16 to 18 (SLS) and Thr-63. Lys-67 functions as the Proton acceptor in the catalytic mechanism. Asn-88 and Asp-103 together coordinate shikimate. NADP(+) is bound by residues 128–132 (GAGGA) and Gly-243.

It belongs to the shikimate dehydrogenase family. In terms of assembly, homodimer.

The enzyme catalyses shikimate + NADP(+) = 3-dehydroshikimate + NADPH + H(+). Its pathway is metabolic intermediate biosynthesis; chorismate biosynthesis; chorismate from D-erythrose 4-phosphate and phosphoenolpyruvate: step 4/7. Functionally, involved in the biosynthesis of the chorismate, which leads to the biosynthesis of aromatic amino acids. Catalyzes the reversible NADPH linked reduction of 3-dehydroshikimate (DHSA) to yield shikimate (SA). In Xylella fastidiosa (strain Temecula1 / ATCC 700964), this protein is Shikimate dehydrogenase (NADP(+)).